The sequence spans 721 residues: uncharacterized protein (721 aa).

The helical transmembrane segment at 6 to 26 threads the bilayer; that stretch reads QLIFVNFYVILIIWWFVMGIL. 308-315 is a binding site for ATP; it reads GGTGSGKT.

Belongs to the GSP E family. In terms of processing, this protein undergoes a protein self splicing that involves a post-translational excision of the intervening region (intein) followed by peptide ligation.

It localises to the membrane. This is an uncharacterized protein from Methanocaldococcus jannaschii (strain ATCC 43067 / DSM 2661 / JAL-1 / JCM 10045 / NBRC 100440) (Methanococcus jannaschii).